The following is an 81-amino-acid chain: Cortexin-2 (81 aa).

Residues 29 to 49 form a helical membrane-spanning segment; sequence TAFAFVGMLLVFLGLLIVRCF.

The protein belongs to the cortexin family.

It is found in the membrane. In Danio rerio (Zebrafish), this protein is Cortexin-2 (ctxn2).